The following is a 318-amino-acid chain: Ribonuclease Z (318 aa).

Zn(2+) is bound by residues His63, His65, Asp67, His68, His142, Asp210, and His268. Asp67 acts as the Proton acceptor in catalysis.

This sequence belongs to the RNase Z family. As to quaternary structure, homodimer. Zn(2+) is required as a cofactor.

The enzyme catalyses Endonucleolytic cleavage of RNA, removing extra 3' nucleotides from tRNA precursor, generating 3' termini of tRNAs. A 3'-hydroxy group is left at the tRNA terminus and a 5'-phosphoryl group is left at the trailer molecule.. Its function is as follows. Zinc phosphodiesterase, which displays some tRNA 3'-processing endonuclease activity. Probably involved in tRNA maturation, by removing a 3'-trailer from precursor tRNA. The polypeptide is Ribonuclease Z (Thermobifida fusca (strain YX)).